We begin with the raw amino-acid sequence, 239 residues long: MKNKRSQNSPYVTPDNPYLTLEKALGYSFKDKRLLEQALTHKSCKLALNNERLEFLGDAVLGLVIGELLYHKFYQYDEGKLSKLRASIVSAHGFTKLAKAIALQDYLRVSSSEEISKGREKPSILSSAFEALMAGVYLEAGLAKVRKIIQNLLNRAYKRLDLEHLFMDYKTALQELTQAQFCVIPTYQLLQEKGPDHHKEFEMALYIQDKMYATAKGKSKKEAEQQCAYQALQKLKEAK.

Residues 18–141 (YLTLEKALGY…LMAGVYLEAG (124 aa)) form the RNase III domain. Residue E54 participates in Mg(2+) binding. Residue D58 is part of the active site. 2 residues coordinate Mg(2+): S127 and E130. Residue E130 is part of the active site. The 70-residue stretch at 168-237 (DYKTALQELT…AYQALQKLKE (70 aa)) folds into the DRBM domain.

It belongs to the ribonuclease III family. Homodimer. Mg(2+) is required as a cofactor.

It is found in the cytoplasm. The enzyme catalyses Endonucleolytic cleavage to 5'-phosphomonoester.. Its function is as follows. Digests double-stranded RNA. Involved in the processing of primary rRNA transcript to yield the immediate precursors to the large and small rRNAs (23S and 16S). Processes some mRNAs, and tRNAs when they are encoded in the rRNA operon. Processes pre-crRNA and tracrRNA of type II CRISPR loci if present in the organism. The polypeptide is Ribonuclease 3 (Helicobacter pylori (strain J99 / ATCC 700824) (Campylobacter pylori J99)).